The sequence spans 414 residues: MNPTLGLAIFLAVLLTVKGLLKPSFSPRNYKALSEVQGWKQRMAAKELARQNMDLGFKLLKKLAFYNPGRNIFLSPLSISTAFSMLCLGAQDSTLDEIKQGFNFRKMPEKDLHEGFHYIIHELTQKTQDLKLSIGNTLFIDQRLQPQRKFLEDAKNFYSAETILTNFQNLEMAQKQINDFISQKTHGKINNLIENIDPGTVMLLANYIFFRARWKHEFDPNVTKEEDFFLEKNSSVKVPMMFRSGIYQVGYDDKLSCTILEIPYQKNITAIFILPDEGKLKHLEKGLQVDTFSRWKTLLSRRVVDVSVPRLHMTGTFDLKKTLSYIGVSKIFEEHGDLTKIAPHRSLKVGEAVHKAELKMDERGTEGAAGTGAQTLPMETPLVVKIDKPYLLLIYSEKIPSVLFLGKIVNPIGK.

Positions 1–20 are cleaved as a signal peptide; that stretch reads MNPTLGLAIFLAVLLTVKGL. Residues Asn221 and Asn233 are each glycosylated (N-linked (GlcNAc...) (complex) asparagine). Asn267 carries an N-linked (GlcNAc...) (high mannose) asparagine glycan. The interval 364–382 is reactive center loop; the sequence is GTEGAAGTGAQTLPMETPL.

It belongs to the serpin family. As to quaternary structure, forms a stable complex with KLK7. Post-translationally, glycosylation slightly decreases affinity for heparin, but otherwise has no significant effect on KLK7 inhibitory activity or thermal stability of the protein. In terms of tissue distribution, expressed in visceral adipose tissues.

It is found in the secreted. Inhibition of KLK7 is enhanced by heparin. Adipokine that modulates insulin action by specifically inhibiting its target protease KLK7 in white adipose tissues. The chain is Serpin A12 (SERPINA12) from Homo sapiens (Human).